The sequence spans 461 residues: Protein FAM124B (461 aa).

Ser49 carries the post-translational modification Phosphoserine. Positions 302 to 346 (VELPEPGGRPVSDGSSNTWWKSAGGSAQPSSPATESQPQLSSLHL) are disordered. Positions 323–334 (SAGGSAQPSSPA) are enriched in low complexity.

The protein belongs to the FAM124 family. In terms of assembly, interacts with CHD7 and CHD8.

The protein resides in the nucleus. The sequence is that of Protein FAM124B (FAM124B) from Bos taurus (Bovine).